The primary structure comprises 400 residues: Zinc finger protein 514 (400 aa).

A KRAB domain is found at 1–72 (MTFEDVAVEF…EREISTGAHS (72 aa)). C2H2-type zinc fingers lie at residues 204-226 (CKCN…QRCH), 232-254 (YECS…QRTH), 260-282 (YECS…YRFH), 288-310 (YKCN…QRTH), 316-338 (YECR…YRFH), 344-366 (YKCN…YRFH), and 372-394 (YKCN…QRSH).

The protein belongs to the krueppel C2H2-type zinc-finger protein family.

The protein localises to the nucleus. Functionally, may be involved in transcriptional regulation. The chain is Zinc finger protein 514 (ZNF514) from Homo sapiens (Human).